The following is a 92-amino-acid chain: Acyl carrier protein AcpXL (92 aa).

Residues 2 to 88 enclose the Carrier domain; that stretch reads TATFDKVADI…NLCAKIDELK (87 aa). Ser37 carries the O-(pantetheine 4'-phosphoryl)serine modification.

4'-phosphopantetheine is transferred from CoA to a specific serine of apo-ACP by AcpS. This modification is essential for activity because fatty acids are bound in thioester linkage to the sulfhydryl of the prosthetic group.

It localises to the cytoplasm. The protein operates within glycolipid biosynthesis; KDO(2)-lipid A biosynthesis. Carrier of the growing fatty acid chain in fatty acid biosynthesis. Is involved in the transfer of long hydroxylated fatty acids to lipid A. Is acylated predominantly with 27-hydroxyoctacosanoic acid. The sequence is that of Acyl carrier protein AcpXL (acpXL) from Rhizobium etli (strain ATCC 51251 / DSM 11541 / JCM 21823 / NBRC 15573 / CFN 42).